Reading from the N-terminus, the 386-residue chain is DNA-directed RNA polymerase subunit Rpo1C (386 aa).

The protein belongs to the RNA polymerase beta' chain family. As to quaternary structure, part of the RNA polymerase complex.

The protein resides in the cytoplasm. The catalysed reaction is RNA(n) + a ribonucleoside 5'-triphosphate = RNA(n+1) + diphosphate. Its function is as follows. DNA-dependent RNA polymerase (RNAP) catalyzes the transcription of DNA into RNA using the four ribonucleoside triphosphates as substrates. Forms part of the jaw domain. This Methanococcus maripaludis (strain DSM 14266 / JCM 13030 / NBRC 101832 / S2 / LL) protein is DNA-directed RNA polymerase subunit Rpo1C.